The primary structure comprises 237 residues: Phosphatidylserine decarboxylase proenzyme (237 aa).

S206 (schiff-base intermediate with substrate; via pyruvic acid) is an active-site residue. S206 bears the Pyruvic acid (Ser); by autocatalysis mark.

The protein belongs to the phosphatidylserine decarboxylase family. PSD-A subfamily. As to quaternary structure, heterodimer of a large membrane-associated beta subunit and a small pyruvoyl-containing alpha subunit. Pyruvate is required as a cofactor. In terms of processing, is synthesized initially as an inactive proenzyme. Formation of the active enzyme involves a self-maturation process in which the active site pyruvoyl group is generated from an internal serine residue via an autocatalytic post-translational modification. Two non-identical subunits are generated from the proenzyme in this reaction, and the pyruvate is formed at the N-terminus of the alpha chain, which is derived from the carboxyl end of the proenzyme. The post-translation cleavage follows an unusual pathway, termed non-hydrolytic serinolysis, in which the side chain hydroxyl group of the serine supplies its oxygen atom to form the C-terminus of the beta chain, while the remainder of the serine residue undergoes an oxidative deamination to produce ammonia and the pyruvoyl prosthetic group on the alpha chain.

The protein resides in the cell membrane. It catalyses the reaction a 1,2-diacyl-sn-glycero-3-phospho-L-serine + H(+) = a 1,2-diacyl-sn-glycero-3-phosphoethanolamine + CO2. It participates in phospholipid metabolism; phosphatidylethanolamine biosynthesis; phosphatidylethanolamine from CDP-diacylglycerol: step 2/2. Its function is as follows. Catalyzes the formation of phosphatidylethanolamine (PtdEtn) from phosphatidylserine (PtdSer). The polypeptide is Phosphatidylserine decarboxylase proenzyme (Rhodococcus erythropolis (strain PR4 / NBRC 100887)).